Reading from the N-terminus, the 802-residue chain is Neuronal PAS domain-containing protein 4 (802 aa).

Residues 1–13 form a basic motif; degenerate region; the sequence is MYRSTKGASKARR. The bHLH domain occupies 1–53; sequence MYRSTKGASKARRDQINAEIRNLKELLPLAEADKVRLSYLHIMSLACIYTRKG. Positions 5 to 38 form a coiled coil; it reads TKGASKARRDQINAEIRNLKELLPLAEADKVRLS. A helix-loop-helix motif region spans residues 14 to 53; sequence DQINAEIRNLKELLPLAEADKVRLSYLHIMSLACIYTRKG. PAS domains are found at residues 70–144 and 203–273; these read SAQE…LDTD and PGPG…LAES. A PAC domain is found at 278–317; sequence AEMVVRLQAKTGGWAWIYCLLYSEGPEGPITANNYPISDM. Composition is skewed to polar residues over residues 466-476, 506-518, and 532-555; these read FSDQLTPSSAT, STFP…STAT, and TPPS…QLSP. Disordered stretches follow at residues 466-485 and 506-555; these read FSDQ…TSPL and STFP…QLSP. A coiled-coil region spans residues 624–648; sequence YSEKEQNEIDRLIQQISQLAQGMDR. Residues 717-749 are disordered; sequence LSTPDPSEEWGSGDPEAEGPGGAPSPCNNLSPE.

As to quaternary structure, efficient DNA binding requires dimerization with another bHLH protein. Heterodimer; forms a heterodimer with ARNT, ARNT2 or BMAL1. In terms of processing, ubiquitinated, leading to degradation by the proteosome. Brain.

The protein resides in the nucleus. Functionally, transcription factor expressed in neurons of the brain that regulates the excitatory-inhibitory balance within neural circuits and is required for contextual memory in the hippocampus. Plays a key role in the structural and functional plasticity of neurons. Acts as an early-response transcription factor in both excitatory and inhibitory neurons, where it induces distinct but overlapping sets of late-response genes in these two types of neurons, allowing the synapses that form on inhibitory and excitatory neurons to be modified by neuronal activity in a manner specific to their function within a circuit, thereby facilitating appropriate circuit responses to sensory experience. In excitatory neurons, activates transcription of BDNF, which in turn controls the number of GABA-releasing synapses that form on excitatory neurons, thereby promoting an increased number of inhibitory synapses on excitatory neurons. In inhibitory neurons, regulates a distinct set of target genes that serve to increase excitatory input onto somatostatin neurons, probably resulting in enhanced feedback inhibition within cortical circuits. The excitatory and inhibitory balance in neurons affects a number of processes, such as short-term and long-term memory, acquisition of experience, fear memory, response to stress and social behavior. Acts as a regulator of dendritic spine development in olfactory bulb granule cells in a sensory-experience-dependent manner by regulating expression of MDM2. Efficient DNA binding requires dimerization with another bHLH protein, such as ARNT, ARNT2 or BMAL1. Can activate the CME (CNS midline enhancer) element. This Homo sapiens (Human) protein is Neuronal PAS domain-containing protein 4.